The chain runs to 100 residues: Large ribosomal subunit protein bL27 (100 aa).

Residues M1–F13 constitute a propeptide that is removed on maturation. Residues G18–N29 are compositionally biased toward basic and acidic residues. The segment at G18 to D39 is disordered.

This sequence belongs to the bacterial ribosomal protein bL27 family. Post-translationally, the N-terminus is cleaved by ribosomal processing cysteine protease Prp.

The chain is Large ribosomal subunit protein bL27 from Ureaplasma urealyticum serovar 10 (strain ATCC 33699 / Western).